The following is a 351-amino-acid chain: MKFLDQCKIYLKSGDGGPGAVAFRREKFIEFGGPDGGNGGRGGDVIIEAVDGLNTLIDYRYQQHFKAKRGGHGMGRSRSGAKGEDAVLRVPVGTQVLDDDQETVLADMTEVGQRIVLLKGGDGGFGNEHYKSSTNRAPRQFTPGWPGEERWVWLRLKLIADAGLVGLPNAGKSTFLAAVSRARPKIADYPFTTLTPNLGVVQAGEEEFVLADIPGLIEGAHEGRGIGTRFLGHVERTRVLLHLVDGTQEDVQLAYRTIRRELRLYGGGLAEKPEIVALNKIDALTPEELEFKRTKLRRSAKKPVMLLSGATGQGVQEMLFELLRHIREARGAEAEAAEEIERRIRYAPIEE.

The Obg domain maps to 1-159 (MKFLDQCKIY…RWVWLRLKLI (159 aa)). The 168-residue stretch at 160 to 327 (ADAGLVGLPN…MLFELLRHIR (168 aa)) folds into the OBG-type G domain. GTP contacts are provided by residues 166–173 (GLPNAGKS), 191–195 (FTTLT), 212–215 (DIPG), 279–282 (NKID), and 308–310 (SGA). Mg(2+) is bound by residues Ser-173 and Thr-193.

The protein belongs to the TRAFAC class OBG-HflX-like GTPase superfamily. OBG GTPase family. In terms of assembly, monomer. Mg(2+) serves as cofactor.

It is found in the cytoplasm. In terms of biological role, an essential GTPase which binds GTP, GDP and possibly (p)ppGpp with moderate affinity, with high nucleotide exchange rates and a fairly low GTP hydrolysis rate. Plays a role in control of the cell cycle, stress response, ribosome biogenesis and in those bacteria that undergo differentiation, in morphogenesis control. The protein is GTPase Obg of Rhodospirillum centenum (strain ATCC 51521 / SW).